The chain runs to 449 residues: Bifunctional protein GlmU (449 aa).

Residues 1 to 229 form a pyrophosphorylase region; that stretch reads MNHFAVILAA…FEETIGVNDR (229 aa). UDP-N-acetyl-alpha-D-glucosamine contacts are provided by residues 8–11, Lys-22, Gln-72, and 77–78; these read LAAG and GT. Asp-102 contacts Mg(2+). UDP-N-acetyl-alpha-D-glucosamine contacts are provided by Gly-139, Glu-154, Asn-169, and Asn-227. Asn-227 contributes to the Mg(2+) binding site. The segment at 230-250 is linker; it reads VALAQAETSMRKRTNEHWMRQ. An N-acetyltransferase region spans residues 251-449; that stretch reads GVTFIDPAST…ERQTTKPDYR (199 aa). UDP-N-acetyl-alpha-D-glucosamine-binding residues include Arg-332 and Lys-350. The active-site Proton acceptor is His-362. Tyr-365 and Asn-376 together coordinate UDP-N-acetyl-alpha-D-glucosamine. Residues 385–386, Ala-422, and Arg-439 contribute to the acetyl-CoA site; that span reads NY.

In the N-terminal section; belongs to the N-acetylglucosamine-1-phosphate uridyltransferase family. This sequence in the C-terminal section; belongs to the transferase hexapeptide repeat family. As to quaternary structure, homotrimer. Mg(2+) serves as cofactor.

The protein localises to the cytoplasm. The catalysed reaction is alpha-D-glucosamine 1-phosphate + acetyl-CoA = N-acetyl-alpha-D-glucosamine 1-phosphate + CoA + H(+). The enzyme catalyses N-acetyl-alpha-D-glucosamine 1-phosphate + UTP + H(+) = UDP-N-acetyl-alpha-D-glucosamine + diphosphate. It participates in nucleotide-sugar biosynthesis; UDP-N-acetyl-alpha-D-glucosamine biosynthesis; N-acetyl-alpha-D-glucosamine 1-phosphate from alpha-D-glucosamine 6-phosphate (route II): step 2/2. Its pathway is nucleotide-sugar biosynthesis; UDP-N-acetyl-alpha-D-glucosamine biosynthesis; UDP-N-acetyl-alpha-D-glucosamine from N-acetyl-alpha-D-glucosamine 1-phosphate: step 1/1. The protein operates within bacterial outer membrane biogenesis; LPS lipid A biosynthesis. Its function is as follows. Catalyzes the last two sequential reactions in the de novo biosynthetic pathway for UDP-N-acetylglucosamine (UDP-GlcNAc). The C-terminal domain catalyzes the transfer of acetyl group from acetyl coenzyme A to glucosamine-1-phosphate (GlcN-1-P) to produce N-acetylglucosamine-1-phosphate (GlcNAc-1-P), which is converted into UDP-GlcNAc by the transfer of uridine 5-monophosphate (from uridine 5-triphosphate), a reaction catalyzed by the N-terminal domain. The sequence is that of Bifunctional protein GlmU from Exiguobacterium sibiricum (strain DSM 17290 / CCUG 55495 / CIP 109462 / JCM 13490 / 255-15).